Consider the following 705-residue polypeptide: Phosphatidylinositol 4-phosphate 5-kinase 3 (705 aa).

MORN repeat units follow at residues Tyr58–Met80, Tyr81–Thr103, Tyr104–Thr126, Tyr127–Gly149, Tyr150–Glu172, Tyr173–Arg195, and Tyr196–Thr218. One can recognise a PIPK domain in the interval Thr321–Phe701. An activation loop region spans residues Tyr661 to Ser682.

It is found in the cell membrane. It catalyses the reaction a 1,2-diacyl-sn-glycero-3-phospho-(1D-myo-inositol 4-phosphate) + ATP = a 1,2-diacyl-sn-glycero-3-phospho-(1D-myo-inositol-4,5-bisphosphate) + ADP + H(+). Its function is as follows. With DRP1A and DRP2B, required for the precise coordination of polar ARAC3/ROP6 and ARAC4/ROP2 placement and subsequent root hair positioning during planar polarity formation in root hair-forming cells, probably by mediating the correct basal-to-planar polarity switching of D6PK into the polar, lipid-enriched domain. The chain is Phosphatidylinositol 4-phosphate 5-kinase 3 from Arabidopsis thaliana (Mouse-ear cress).